The sequence spans 440 residues: Xaa-Pro dipeptidase (440 aa).

Mn(2+) contacts are provided by D244, D255, H335, E380, and E419.

The protein belongs to the peptidase M24B family. Bacterial-type prolidase subfamily. Mn(2+) is required as a cofactor.

The catalysed reaction is Xaa-L-Pro dipeptide + H2O = an L-alpha-amino acid + L-proline. Splits dipeptides with a prolyl residue in the C-terminal position. The polypeptide is Xaa-Pro dipeptidase (Shewanella piezotolerans (strain WP3 / JCM 13877)).